A 206-amino-acid chain; its full sequence is Ribosomal RNA large subunit methyltransferase E (206 aa).

S-adenosyl-L-methionine is bound by residues G60, W62, D80, D96, and D121. K161 acts as the Proton acceptor in catalysis.

Belongs to the class I-like SAM-binding methyltransferase superfamily. RNA methyltransferase RlmE family.

The protein resides in the cytoplasm. The enzyme catalyses uridine(2552) in 23S rRNA + S-adenosyl-L-methionine = 2'-O-methyluridine(2552) in 23S rRNA + S-adenosyl-L-homocysteine + H(+). In terms of biological role, specifically methylates the uridine in position 2552 of 23S rRNA at the 2'-O position of the ribose in the fully assembled 50S ribosomal subunit. In Nitrosomonas eutropha (strain DSM 101675 / C91 / Nm57), this protein is Ribosomal RNA large subunit methyltransferase E.